The chain runs to 340 residues: Predicted GPI-anchored protein 46 (340 aa).

The first 29 residues, 1-29 (MKILLIYSMTPKLVIWFTLFVLCLQMGDT), serve as a signal peptide directing secretion. Low complexity predominate over residues 99 to 115 (SETTTTTTQESETSIAT). Disordered regions lie at residues 99–154 (SETT…SLSS) and 181–212 (MSSS…IKNY). N-linked (GlcNAc...) asparagine glycosylation is present at N127. The segment covering 182–191 (SSSSSSSSGS) has biased composition (low complexity). A compositionally biased stretch (basic and acidic residues) spans 192–202 (LRDKSKLKQEN). A glycan (N-linked (GlcNAc...) asparagine) is linked at N270. N314 carries the GPI-anchor amidated asparagine lipid modification. Residues 315-340 (SAPLLWIKISKPTVCLVIALTFLLLG) constitute a propeptide, removed in mature form.

Its subcellular location is the cell membrane. The protein resides in the secreted. The polypeptide is Predicted GPI-anchored protein 46 (PGA46) (Candida albicans (strain SC5314 / ATCC MYA-2876) (Yeast)).